We begin with the raw amino-acid sequence, 156 residues long: Ribosomal RNA large subunit methyltransferase H (156 aa).

S-adenosyl-L-methionine contacts are provided by residues Leu73, Gly104, and 123 to 128 (LSPLTF).

It belongs to the RNA methyltransferase RlmH family. Homodimer.

Its subcellular location is the cytoplasm. It carries out the reaction pseudouridine(1915) in 23S rRNA + S-adenosyl-L-methionine = N(3)-methylpseudouridine(1915) in 23S rRNA + S-adenosyl-L-homocysteine + H(+). Its function is as follows. Specifically methylates the pseudouridine at position 1915 (m3Psi1915) in 23S rRNA. In Thioalkalivibrio sulfidiphilus (strain HL-EbGR7), this protein is Ribosomal RNA large subunit methyltransferase H.